We begin with the raw amino-acid sequence, 593 residues long: Actin-histidine N-methyltransferase (593 aa).

Residues 1 to 21 (MGKKSRVKTQKSGTGATAAVS) are disordered. S-adenosyl-L-methionine contacts are provided by residues arginine 75, 104–106 (EGF), arginine 254, 275–279 (DMCNH), and 325–327 (SGF). The SET domain occupies 94–314 (EGFEIANFEE…AGEQIYIFYG (221 aa)). Residues 549-593 (GFVNGENSLFNGTKSESENLIKEESNRETEDAKESSSESTDEVKE) form a disordered region. Over residues 553 to 562 (GENSLFNGTK) the composition is skewed to polar residues. Over residues 563 to 593 (SESENLIKEESNRETEDAKESSSESTDEVKE) the composition is skewed to basic and acidic residues.

This sequence belongs to the class V-like SAM-binding methyltransferase superfamily. SETD3 actin-histidine methyltransferase family.

It localises to the cytoplasm. It catalyses the reaction L-histidyl-[protein] + S-adenosyl-L-methionine = N(tele)-methyl-L-histidyl-[protein] + S-adenosyl-L-homocysteine + H(+). In terms of biological role, protein-histidine N-methyltransferase that specifically mediates 3-methylhistidine (tele-methylhistidine) methylation of actin at 'His-73'. Does not have protein-lysine N-methyltransferase activity and probably only catalyzes histidine methylation of actin. This Gallus gallus (Chicken) protein is Actin-histidine N-methyltransferase.